Consider the following 481-residue polypeptide: Aspartyl/glutamyl-tRNA(Asn/Gln) amidotransferase subunit B (481 aa).

Belongs to the GatB/GatE family. GatB subfamily. In terms of assembly, heterotrimer of A, B and C subunits.

The catalysed reaction is L-glutamyl-tRNA(Gln) + L-glutamine + ATP + H2O = L-glutaminyl-tRNA(Gln) + L-glutamate + ADP + phosphate + H(+). The enzyme catalyses L-aspartyl-tRNA(Asn) + L-glutamine + ATP + H2O = L-asparaginyl-tRNA(Asn) + L-glutamate + ADP + phosphate + 2 H(+). In terms of biological role, allows the formation of correctly charged Asn-tRNA(Asn) or Gln-tRNA(Gln) through the transamidation of misacylated Asp-tRNA(Asn) or Glu-tRNA(Gln) in organisms which lack either or both of asparaginyl-tRNA or glutaminyl-tRNA synthetases. The reaction takes place in the presence of glutamine and ATP through an activated phospho-Asp-tRNA(Asn) or phospho-Glu-tRNA(Gln). This Pseudomonas syringae pv. syringae (strain B728a) protein is Aspartyl/glutamyl-tRNA(Asn/Gln) amidotransferase subunit B.